We begin with the raw amino-acid sequence, 370 residues long: Uroporphyrinogen decarboxylase (370 aa).

Residues 29–33, D79, Y155, S210, and H342 contribute to the substrate site; that span reads RQAGR.

This sequence belongs to the uroporphyrinogen decarboxylase family. In terms of assembly, homodimer.

It localises to the cytoplasm. It carries out the reaction uroporphyrinogen III + 4 H(+) = coproporphyrinogen III + 4 CO2. It functions in the pathway porphyrin-containing compound metabolism; protoporphyrin-IX biosynthesis; coproporphyrinogen-III from 5-aminolevulinate: step 4/4. Its function is as follows. Catalyzes the decarboxylation of four acetate groups of uroporphyrinogen-III to yield coproporphyrinogen-III. This chain is Uroporphyrinogen decarboxylase, found in Acidovorax sp. (strain JS42).